Reading from the N-terminus, the 209-residue chain is MRDPIETVMNLVPMVVEQTNRGERAYDIFSRLLKERIIFVNGPVEDGMSMLVCAQLLFLEAENPKKEINMYINSPGGVVTSGMAIYDTMQFIRPPVSTLCMGQAASMGSLLLTAGATGHRYALLNARIMVHQPSGGFQGQASDIERHAQDIIKMKRRLNEIYVKHTGRDYDTIERTLDRDHFMTAQEALEFGLIDKVVEARDVSADESK.

Ser106 (nucleophile) is an active-site residue. His131 is an active-site residue.

The protein belongs to the peptidase S14 family. In terms of assembly, fourteen ClpP subunits assemble into 2 heptameric rings which stack back to back to give a disk-like structure with a central cavity, resembling the structure of eukaryotic proteasomes.

Its subcellular location is the cytoplasm. It carries out the reaction Hydrolysis of proteins to small peptides in the presence of ATP and magnesium. alpha-casein is the usual test substrate. In the absence of ATP, only oligopeptides shorter than five residues are hydrolyzed (such as succinyl-Leu-Tyr-|-NHMec, and Leu-Tyr-Leu-|-Tyr-Trp, in which cleavage of the -Tyr-|-Leu- and -Tyr-|-Trp bonds also occurs).. Its function is as follows. Cleaves peptides in various proteins in a process that requires ATP hydrolysis. Has a chymotrypsin-like activity. Plays a major role in the degradation of misfolded proteins. This chain is ATP-dependent Clp protease proteolytic subunit, found in Brucella melitensis biotype 2 (strain ATCC 23457).